The primary structure comprises 265 residues: MLRRFAVIGNPIVHSLSPVIHQMFAQQTQIELIYEKILGDDVKFEQQISDFFIQYGNGLNVTLPYKKRAYELAKVRTQRCTLAGAANTLWMEENQLHADNTDGIGLIRDLSRFLELKDKKILILGAGGAARGIIFPLLEAKPLQLIVANRTLEKAKELQRQFPQINVTSFAELTEFFDLIINATSASLSHQVIVLPEEVLSHKPFCYDLAYNQKTSTAFVQYARNRGCEAVDGLGMLVEQAAEAFFIWNNIMPSTKEILEQLRSF.

Shikimate-binding positions include 15-17 (SLS) and Thr62. Residue Lys66 is the Proton acceptor of the active site. Shikimate contacts are provided by Asn87 and Asp102. NADP(+) contacts are provided by residues 125-129 (GAGGA), 149-154 (NRTLEK), and Leu209. Tyr211 lines the shikimate pocket. Gly233 provides a ligand contact to NADP(+).

This sequence belongs to the shikimate dehydrogenase family. In terms of assembly, homodimer.

The enzyme catalyses shikimate + NADP(+) = 3-dehydroshikimate + NADPH + H(+). It participates in metabolic intermediate biosynthesis; chorismate biosynthesis; chorismate from D-erythrose 4-phosphate and phosphoenolpyruvate: step 4/7. Functionally, involved in the biosynthesis of the chorismate, which leads to the biosynthesis of aromatic amino acids. Catalyzes the reversible NADPH linked reduction of 3-dehydroshikimate (DHSA) to yield shikimate (SA). In Legionella pneumophila (strain Lens), this protein is Shikimate dehydrogenase (NADP(+)).